A 401-amino-acid chain; its full sequence is MAKEKFDRSKPHLNVGTIGHVDHGKTTLTAAITTTLAKAIGGKNKAVAYDQIDNAPEEKARGITIATSHQEYETNNRHYAHVDCPGHADYVKNMITGAAQMDAAILVVSATDGPMPQTKEHILLARQVGVPYVIVFINKADMLAADERAEMIEMVEMDVRDLLNKYNFPGDTTPIVYGSAVKALEGDESEIGAPAILKLMEALDTFVPNPKRVTDKPFLMPVEDVFSITGRGTVATGRVEQGVLKVNDEVEIIGIRPTTKTVVTGIEMFRKLLDQAEAGDNIGALLRGTKKEDIERGQVLAKPGSITPHKKFAAEVYVLTKDEGGRHTPFINNYRPQFYFRTTDVTGVCNLPNGVEMVMPGDNVSLTVELISPIAMDKGLKFAIREGGRTIGSGVVVDIIE.

One can recognise a tr-type G domain in the interval 10–211 (KPHLNVGTIG…ALDTFVPNPK (202 aa)). The interval 19 to 26 (GHVDHGKT) is G1. 19–26 (GHVDHGKT) provides a ligand contact to GTP. T26 serves as a coordination point for Mg(2+). Residues 62–66 (GITIA) form a G2 region. The segment at 83 to 86 (DCPG) is G3. GTP is bound by residues 83 to 87 (DCPGH) and 138 to 141 (NKAD). Residues 138–141 (NKAD) are G4. The tract at residues 179–181 (SAV) is G5.

This sequence belongs to the TRAFAC class translation factor GTPase superfamily. Classic translation factor GTPase family. EF-Tu/EF-1A subfamily. Monomer.

The protein localises to the cytoplasm. It carries out the reaction GTP + H2O = GDP + phosphate + H(+). In terms of biological role, GTP hydrolase that promotes the GTP-dependent binding of aminoacyl-tRNA to the A-site of ribosomes during protein biosynthesis. The sequence is that of Elongation factor Tu from Leptospira borgpetersenii serovar Hardjo-bovis (strain JB197).